The sequence spans 92 residues: Elongation factor 1-beta (92 aa).

It belongs to the EF-1-beta/EF-1-delta family.

Promotes the exchange of GDP for GTP in EF-1-alpha/GDP, thus allowing the regeneration of EF-1-alpha/GTP that could then be used to form the ternary complex EF-1-alpha/GTP/AAtRNA. In Korarchaeum cryptofilum (strain OPF8), this protein is Elongation factor 1-beta.